The chain runs to 492 residues: G2/mitotic-specific cyclin CLB2 (492 aa).

A disordered region spans residues 1-176 (MPQVTKTNNE…QPEVGERSQS (176 aa)). A compositionally biased stretch (polar residues) spans 23 to 33 (QESISTIKNTT). Low complexity predominate over residues 34-58 (ISNSQHKQQTQQQISSPPQVSVTSS). Residues 59-83 (EGVSHVNTRQYLGDVSNQYITNAKP) are compositionally biased toward polar residues. Residues 111–135 (ASDNNNNGSTSSSSNSSNNNNNDAN) show a composition bias toward low complexity. One can recognise a Cyclin N-terminal domain in the interval 208–334 (EIFSYYYELE…MLTILNFDLN (127 aa)).

It belongs to the cyclin family. Cyclin AB subfamily.

In terms of biological role, 2/mitotic-specific cyclin essential for the control of the cell cycle at the G2/M (mitosis) transition. G2/M cyclins accumulate steadily during G2 and are abruptly destroyed at mitosis. Degradation is necessary for the cell to exit from mitosis. Plays a role in morphogenesis by negatively regulating polarized growth. Through binding to CDC28 regulates cytokinesis, partly by phosphorylation of the actomyosin ring component IQG1. Also involved in the phosphorylation of CDC6 and CDC54. The polypeptide is G2/mitotic-specific cyclin CLB2 (CLB2) (Candida albicans (strain SC5314 / ATCC MYA-2876) (Yeast)).